Reading from the N-terminus, the 578-residue chain is E3 ubiquitin-protein ligase Praja-1 (578 aa).

The segment at M1–A298 is disordered. 2 stretches are compositionally biased toward basic and acidic residues: residues D57–R67 and K107–A116. Residues S151–S163 are compositionally biased toward polar residues. Phosphothreonine is present on T231. 2 stretches are compositionally biased toward basic and acidic residues: residues R243–G264 and R273–V290. A phosphoserine mark is found at S317 and S319. The disordered stretch occupies residues R332 to P397. The segment covering A359–G373 has biased composition (low complexity). Acidic residues predominate over residues E377–E395. The RING-type zinc finger occupies C530–R571.

As to quaternary structure, binds ubiquitin-conjugating enzymes (E2s). Binds, in vitro and in vivo, the MAGE conserved domain of MAGED1. Binds weakly Necdin, in vitro. Interacts with UBE2D2. Substrate for E2-dependent ubiquitination. Expressed in brain, liver, kidney. Highest levels in brain where it is found in many regions including cortical and subcortical areas and in neurons of the amygdala. Weak expression also found in testis. Also expressed in developing embryo.

The catalysed reaction is S-ubiquitinyl-[E2 ubiquitin-conjugating enzyme]-L-cysteine + [acceptor protein]-L-lysine = [E2 ubiquitin-conjugating enzyme]-L-cysteine + N(6)-ubiquitinyl-[acceptor protein]-L-lysine.. Has E2-dependent E3 ubiquitin-protein ligase activity. Ubiquitinates MAGED1 antigen leading to its subsequent degradation by proteasome. May be involved in protein sorting. This Mus musculus (Mouse) protein is E3 ubiquitin-protein ligase Praja-1 (Pja1).